The following is a 1514-amino-acid chain: Helicase SWR1 (1514 aa).

The HSA domain occupies 339–411 (ISYFYKQQDL…EERHKKSLAR (73 aa)). Positions 465–480 (QVNDDGRSSTPSSDSN) are enriched in polar residues. 2 disordered regions span residues 465 to 524 (QVND…PTDE) and 538 to 641 (FNGS…KDQV). The span at 484–508 (SESDDDMDDELSTSSDEDEEVDADV) shows a compositional bias: acidic residues. Polar residues predominate over residues 513 to 524 (SPASTEATPTDE). Basic and acidic residues predominate over residues 547–563 (SRNKDEKFPTLDKHESS). A compositionally biased stretch (low complexity) spans 564–586 (SSESSVMTGEESSIYSSSENESQ). Basic and acidic residues predominate over residues 588–597 (ENDRESDDKT). Over residues 612 to 623 (SDGDLDLDDSED) the composition is skewed to acidic residues. The region spanning 708 to 873 (ASLYNNHTNG…WSLLYFLMPQ (166 aa)) is the Helicase ATP-binding domain. 721–728 (DEMGLGKT) provides a ligand contact to ATP. Positions 824 to 827 (DEAH) match the DEAH box motif. In terms of domain architecture, Helicase C-terminal spans 1247-1400 (KLQKLAILLQ…NVVIQEGDFT (154 aa)). Residues 1469 to 1490 (NDDFDESTEKKAANEEEENHAE) form a disordered region. Residues 1475 to 1490 (STEKKAANEEEENHAE) show a composition bias toward basic and acidic residues.

The protein belongs to the SNF2/RAD54 helicase family. SWR1 subfamily. In terms of assembly, component of the SWR1 chromatin-remodeling complex composed of at least ACT1, ARP4, RVB1, RVB2, ARP6, YAF9, VPS71, VPS72, SWC3, SWC4, SWC5, SWC7 and SWR1, and perhaps BDF1.

The protein resides in the nucleus. The catalysed reaction is ATP + H2O = ADP + phosphate + H(+). Its function is as follows. Catalytic component of the SWR1 complex which mediates the ATP-dependent exchange of histone H2A for the H2A variant HZT1 leading to transcriptional regulation of selected genes by chromatin remodeling. The chain is Helicase SWR1 (SWR1) from Saccharomyces cerevisiae (strain ATCC 204508 / S288c) (Baker's yeast).